A 249-amino-acid polypeptide reads, in one-letter code: Cysteine-rich secretory protein 1 (249 aa).

The first 20 residues, 1–20 (MEIKHLLFLVAAACLLPVLS), serve as a signal peptide directing secretion. Residues 45–175 (VNIHNTLRRG…SPRYFYVCHY (131 aa)) form the SCP domain. A glycan (N-linked (GlcNAc...) asparagine) is linked at Asn104. Intrachain disulfides connect Cys195–Cys202, Cys198–Cys207, Cys211–Cys244, Cys220–Cys238, and Cys229–Cys242. One can recognise a ShKT domain in the interval 211–244 (CIYYDEYTDCSLEVRFLGCNHSTPRMFCKATCLC). N-linked (GlcNAc...) asparagine glycosylation occurs at Asn230.

The protein belongs to the CRISP family. As to expression, expressed in all the regions of the epididymis except the caput and is not detected in the testis, prostate, seminal vesicle, and brain.

May have a role in sperm-egg fusion and maturation. In Macaca mulatta (Rhesus macaque), this protein is Cysteine-rich secretory protein 1 (CRISP1).